The following is a 368-amino-acid chain: PPE family immunomodulator PPE68 (368 aa).

2 disordered regions span residues 255–280 (LGTS…LLRA) and 312–368 (AAAG…EDDW). Residues 312-327 (AAAGSSATGGAAPVGA) are compositionally biased toward low complexity. The span at 354 to 368 (REEDDEDDWDEEDDW) shows a compositional bias: acidic residues.

Belongs to the mycobacterial PPE family. As to quaternary structure, homodimer. Interacts with PE35. PE35/PPE68 complex interacts with human TLR2.

The protein resides in the secreted. It is found in the cell wall. Its subcellular location is the cell membrane. It localises to the cell surface. Its function is as follows. Plays a major role in RD1-associated pathogenesis, and may contribute to the establishment and maintenance of M.tuberculosis infection. Together with PE35, stimulates the secretion of IL-10 and MCP-1 from human macrophages, via the interaction with human Toll-like receptor 2 (TLR2). The sequence is that of PPE family immunomodulator PPE68 (PPE68) from Mycobacterium tuberculosis (strain CDC 1551 / Oshkosh).